Here is a 370-residue protein sequence, read N- to C-terminus: Homoserine kinase (370 aa).

The transit peptide at 1–34 (MASLCFQSPSKPISYFQPKSNPSPPLFAKVSVFR) directs the protein to the chloroplast. Position 143-154 (143-154 (LPLGSGLGSSAA)) interacts with ATP.

It belongs to the GHMP kinase family. Homoserine kinase subfamily.

It is found in the plastid. The protein localises to the chloroplast stroma. The catalysed reaction is L-homoserine + ATP = O-phospho-L-homoserine + ADP + H(+). Its pathway is amino-acid biosynthesis; L-threonine biosynthesis; L-threonine from L-aspartate: step 4/5. Functionally, catalyzes the ATP-dependent phosphorylation of L-homoserine to L-homoserine phosphate. Is specific for L-homoserine and cannot use other substrates such D-serine, L-serine, D-threonine and L-threonine, galactose or D-homoserine in vitro. Required for susceptibility to the downy mildew pathogen Hyaloperonospora parasitica. The protein is Homoserine kinase (HSK) of Arabidopsis thaliana (Mouse-ear cress).